The sequence spans 510 residues: MIEDQALFGYARYGKVDDVVYPSVIASGNGINYGDSDIEILGDRIPRQILYPAKIKQEILETDKLVIIPNGAELVRKPKDLVRIIMDIHSRYGFSKLIMISGISDPYSIPALVYLGISFFDSSILEMEGKMGYRFTPFGIEKADHDVSSENAIFISDMMHIIQRSISDGTLRELIEKAVISSKAAEMVRIADYSYYQDFESVFPVRTPYIKANTIEDLYRPDLIRYRNYISESYVKPDADIALILPCSAKKPYSRSKSHQKVIGALGNLRRFIHEVIVTSPIGIVPRDLEETYPARFYDIPVIGLWYEDEKIMMKRMMSSYMGRNRYRKVIAFIPEDLDFITEAIPYPHEVIEFKSSNLQRLREVIQREIAGGKAVNQKVAKYNSILRYQFGEWILPLVSGYTIRRNYNQDMIVKDGKILFVYNENLGKFTINKASADMFIKNGKFLVEIDDFKPTSNVYAMGVVDATEDIRQEDEVVLVHSGEVRGVGIAKMPARAMIELKKGIAVKVR.

Positions 427–510 constitute a PUA domain; the sequence is LGKFTINKAS…LKKGIAVKVR (84 aa).

This sequence belongs to the archaeosine synthase type 1 family. Forms a robust complex with the archaeosine synthase beta subunit RaSEA, likely an alpha(2)beta(2) heterotetrameric structure. Formation of this complex highly increases lysine transfer activity.

The catalysed reaction is 7-cyano-7-carbaguanosine(15) in tRNA + L-lysine = 7-N-[(5S)-5-amino-5-carboxypentyl]formamidino-7-deazaguanosine(15) in tRNA. It participates in tRNA modification; archaeosine-tRNA biosynthesis. Its function is as follows. Functions in the biosynthesis of archaeosine, a modified nucleoside present in the dihydrouridine loop (D-loop) of archaeal tRNAs. Catalyzes the addition of L-lysine to the cyano group of 7-cyano-7-deazaguanine (preQ0)-modified tRNAs at position 15, to generate q0kN15-tRNA, a q0N lysine adduct identified as 7-N-[(5S)-5-amino-5-carboxypentyl]formamidino-7-deazaguanosine. This Thermoplasma acidophilum (strain ATCC 25905 / DSM 1728 / JCM 9062 / NBRC 15155 / AMRC-C165) protein is Archaeosine synthase subunit alpha.